The sequence spans 136 residues: Large-conductance mechanosensitive channel (136 aa).

2 consecutive transmembrane segments (helical) span residues 10 to 30 (FAMR…AAFG) and 76 to 96 (GSFI…FSAV).

Belongs to the MscL family. In terms of assembly, homopentamer.

Its subcellular location is the cell inner membrane. Channel that opens in response to stretch forces in the membrane lipid bilayer. May participate in the regulation of osmotic pressure changes within the cell. The protein is Large-conductance mechanosensitive channel of Yersinia enterocolitica serotype O:8 / biotype 1B (strain NCTC 13174 / 8081).